Consider the following 142-residue polypeptide: Large ribosomal subunit protein uL13 (142 aa).

This sequence belongs to the universal ribosomal protein uL13 family. In terms of assembly, part of the 50S ribosomal subunit.

In terms of biological role, this protein is one of the early assembly proteins of the 50S ribosomal subunit, although it is not seen to bind rRNA by itself. It is important during the early stages of 50S assembly. This Methanosphaera stadtmanae (strain ATCC 43021 / DSM 3091 / JCM 11832 / MCB-3) protein is Large ribosomal subunit protein uL13.